The sequence spans 454 residues: tRNA modification GTPase MnmE (454 aa).

Residues arginine 23, glutamate 80, and lysine 120 each coordinate (6S)-5-formyl-5,6,7,8-tetrahydrofolate. Residues 216–377 form the TrmE-type G domain; it reads GMKVVIAGRP…LRNHLKQSMG (162 aa). K(+) is bound at residue asparagine 226. GTP-binding positions include 226–231, 245–251, 270–273, 335–338, and 358–360; these read NAGKSS, TDIAGTT, DTAG, NKAD, and SAR. Residue serine 230 coordinates Mg(2+). Threonine 245, isoleucine 247, and threonine 250 together coordinate K(+). Threonine 251 lines the Mg(2+) pocket. Position 454 (lysine 454) interacts with (6S)-5-formyl-5,6,7,8-tetrahydrofolate.

Belongs to the TRAFAC class TrmE-Era-EngA-EngB-Septin-like GTPase superfamily. TrmE GTPase family. As to quaternary structure, homodimer. Heterotetramer of two MnmE and two MnmG subunits. K(+) is required as a cofactor.

Its subcellular location is the cytoplasm. Functionally, exhibits a very high intrinsic GTPase hydrolysis rate. Involved in the addition of a carboxymethylaminomethyl (cmnm) group at the wobble position (U34) of certain tRNAs, forming tRNA-cmnm(5)s(2)U34. This Klebsiella pneumoniae (strain 342) protein is tRNA modification GTPase MnmE.